Here is a 1935-residue protein sequence, read N- to C-terminus: MGDAELAVFGSAAPYLRKTEKERLEDQTRPFDLKKDVFVPDDKEEFVKAKIISREGGKITAETEHGKTVTVKEDQVLQQNPPKFDKIEDMAMLTFLHEPAVLYNLKDRYAAWMIYTYSGLFCVTINPYKWLPVYTAEVVAAYRGKKRSEAPPHIFSISDNAYQYMLTDRENQSILITGESGAGKTVNTKRVIQYFAVIAAIGDRSKKDQTSGKGTLEDQIIEANPALEAFGNAKTVRNDNSSRFGKFIRIHFGATGKLASADIETYLLEKSRVIFQLKAERDYHIFYQILSNKKPELLDMLLITNNPYDYAFISQGETTVASIDDAEELMATDNAFDVLGFTSEEKNSMYKLTGAIMHFGNMKFKQKQREEQAEPDGTEEADKSAYLMGLNSADLLKGLCHPRVKVGNEYVTKGQNVQQVAYAKGALAKAVYERMFNWMVARINATLETKQPRQYFIGVLDIAGFEIFDFNSFEQLCINFTNEKLQQFFNHHMFVLEQEEYKKEGIEWEFIDFGMDLQACIDLIEKPMGIMSILEEECMFPKATDMTFKAKLFDNHLGKSSNFQKPRNIKGKPEAHFSLIHYAGTVDYNILGWLQKNKDPLNETVVDLYKKSSLKMLSNLFANYLGADAPIEKGKGKAKKGSSFQTVSALHRENLNKLMTNLRSTHPHFVRCIIPNETKSPGVIDNPLVMHQLRCNGVLEGIRICRKGFPNRILYGDFRQRYRILNPAAIPEGQFIDSRKGAEKLLSSLDIDHNQYRFGHTKVFFKAGLLGLLEEMRDERLSRIITRIQAQSRGVLARMEFKKLLERRDSLLIIQWNIRAFMGVKNWPWMKLYFKIKPLLKSAETEKEMATMKEEFARLKEALEKSEARRKELEEKMVSLLQEKNDLQLQVQAEQDNLADAEERCDQLIKNKIQLEAKVKEMTERLEDEEEMNAELTAKKRKLEDECSELKRDIDDLELTLAKVEKEKHATENKVKNLTEEMAGLDEIIAKLTKEKKALQEAHQQALDDLQAEEDKVNTLTKAKVKLEQHVDDLEGSLEQEKKVRMDLERAKRKLEGDLKLTQESIMDLENDKQQLDERLKKKDFELNALNARIEDEQALGSQLQKKLKELQARIEELEEELEAERTARAKVEKLRSDLSRELEEISERLEEAGGATSVQIEMNKKREAEFQKMKRDLEEATLQHEATAAALRKKHADSVAELGEQIDNLQRVKQKLEKEKSEFKLELDDVTSNMEQIIKAKANLEKMCRTLEDQMNEHRSKAEETQRSVNDLTSQRAKLQTENGELSRQLDEKEALISQLTRGKLTYTQQLEDLKRQLEEEVKAKNALAHALQSARHDCDLLREQYEEETEAKAELQRVLSKANSEVAQWRTKYETDAIQRTEELEEAKKKLAQRLQDAEEAVEAVNAKCSSLEKTKHRLQNEIEDLMVDVERSNAAAAALDKKQRNFDKILAEWKQKYEESQSELESSQKEARSLSTELFKLKNAYEESLEHLETFKRENKNLQEEISDLTEQLGSSGKTIHELEKVRKQLEAEKLELQSALEEAEASLEHEEGKILRAQLEFNQIKAEIERKLAEKDEEMEQAKRNHLRVVDSLQTSLDAETRSRNEALRVKKKMEGDLNEMEIQLSHANRMAAEAQKQVKSLQSLLKDTQIQLDDAVRANDDLKENIAIVERRNNLLQAELEELRAVVEQTERSRKLAEQELIETSERVQLLHSQNTSLINQKKKMDADLSQLQTEVEEAVQECRDAEEKAKKAITDAAMMAEELKKEQDTSAHLERMKKNMEQTIKDLQHRLDEAEQIALKGGKKQLQKLEARVRELENELEVEQKRNAESIKGMRKSERRIKELTYQTEEDRKNLLRLQDLVDKLQLKVKAYKRQAEEAEEQANTNLSKFRKVQHELDEAEERADIAESQVNKLRAKSRDIGTKGLNEE.

The Myosin N-terminal SH3-like domain maps to Asp32–Pro81. The Myosin motor domain occupies Asp85 to Asp778. Lys129 carries the post-translational modification N6,N6,N6-trimethyllysine. Gly178–Thr185 contacts ATP. Thr378 is subject to Phosphothreonine. 2 actin-binding regions span residues Leu655 to Glu677 and Arg757 to Gly771. The 30-residue stretch at Leu781–Ser810 folds into the IQ domain. A coiled-coil region spans residues Leu839–Glu1935. Phosphoserine occurs at positions 1137 and 1269. Phosphothreonine is present on Thr1282. Tyr1308 carries the post-translational modification Phosphotyrosine. The residue at position 1309 (Thr1309) is a Phosphothreonine. The residue at position 1510 (Ser1510) is a Phosphoserine. Thr1513 is modified (phosphothreonine). Positions Glu1907 to Glu1935 are disordered. A compositionally biased stretch (basic and acidic residues) spans Lys1923–Glu1935.

The protein belongs to the TRAFAC class myosin-kinesin ATPase superfamily. Myosin family. In terms of assembly, muscle myosin is a hexameric protein that consists of 2 heavy chain subunits (MHC), 2 alkali light chain subunits (MLC) and 2 regulatory light chain subunits (MLC-2). Interacts with ECPAS. Interacts (via C-terminus) with LRRC39.

The protein resides in the cytoplasm. It localises to the myofibril. Its subcellular location is the sarcomere. Its function is as follows. Myosins are actin-based motor molecules with ATPase activity essential for muscle contraction. Forms regular bipolar thick filaments that, together with actin thin filaments, constitute the fundamental contractile unit of skeletal and cardiac muscle. The polypeptide is Myosin-7 (MYH7) (Equus caballus (Horse)).